A 364-amino-acid polypeptide reads, in one-letter code: Fructose-bisphosphate aldolase, non-muscle type (364 aa).

Residues Arg-56 and Lys-147 each coordinate substrate. Lys-230 (schiff-base intermediate with dihydroxyacetone-P) is an active-site residue.

This sequence belongs to the class I fructose-bisphosphate aldolase family. As to quaternary structure, homotetramer. As to expression, expressed mainly in the liver and also in brain and other tissues, except for the heart muscle.

The catalysed reaction is beta-D-fructose 1,6-bisphosphate = D-glyceraldehyde 3-phosphate + dihydroxyacetone phosphate. It functions in the pathway carbohydrate degradation; glycolysis; D-glyceraldehyde 3-phosphate and glycerone phosphate from D-glucose: step 4/4. The sequence is that of Fructose-bisphosphate aldolase, non-muscle type from Lethenteron camtschaticum (Japanese lamprey).